Reading from the N-terminus, the 270-residue chain is Small ribosomal subunit protein eS1 (270 aa).

The segment at 235 to 270 (GTSKGGAASTAAVAKGEEGVKVDRPEGYEPPVLETV) is disordered. Residues 239–248 (GGAASTAAVA) are compositionally biased toward low complexity. Basic and acidic residues predominate over residues 249–261 (KGEEGVKVDRPEG).

Belongs to the eukaryotic ribosomal protein eS1 family. As to quaternary structure, component of the small ribosomal subunit. Mature ribosomes consist of a small (40S) and a large (60S) subunit. The 40S subunit contains about 33 different proteins and 1 molecule of RNA (18S). The 60S subunit contains about 49 different proteins and 3 molecules of RNA (28S, 5.8S and 5S).

The protein localises to the cytoplasm. In Ixodes scapularis (Black-legged tick), this protein is Small ribosomal subunit protein eS1.